We begin with the raw amino-acid sequence, 122 residues long: Small ribosomal subunit protein uS12cz/uS12cy (122 aa).

The protein belongs to the universal ribosomal protein uS12 family. Part of the 30S ribosomal subunit.

Its subcellular location is the plastid. It localises to the chloroplast. In terms of biological role, with S4 and S5 plays an important role in translational accuracy. Located at the interface of the 30S and 50S subunits. The sequence is that of Small ribosomal subunit protein uS12cz/uS12cy (rps12-A) from Triticum aestivum (Wheat).